A 274-amino-acid chain; its full sequence is HTH-type transcriptional regulator GadX (274 aa).

In terms of domain architecture, HTH araC/xylS-type spans 145–242 (TRVCTVINNN…GMTPTEYQER (98 aa)). 2 DNA-binding regions (H-T-H motif) span residues 162 to 183 (ARIA…REEE) and 209 to 232 (IKRV…RNYY).

As to quaternary structure, homodimer.

Positively regulates the expression of about fifteen genes involved in acid resistance such as gadA, gadB and gadC. Depending on the conditions (growth phase and medium), can repress gadW. This is HTH-type transcriptional regulator GadX (gadX) from Shigella flexneri.